The following is a 368-amino-acid chain: MVHYRNRYLNYIRRKPLALLAPITLLVVIYFYFFSAHGFSSNKQKYNYNKKSRGWFYKNRDTVILKDLPKNHISHYDLNKLTASKDALNKREEVLILTPMSKFLPEYWENINKLTYDHSLISLGFIFPRTTQGDDALKELENALKKTKREKRLNFKKITILRQDSNSLQSQLEKDRHAFKVQKERRSMMALARNSLVFSTILPSTSWVLWLDADIVETPVTLIQDLTGHNKPVVSANVHQRFINQDTKQPDIRPYDFNNWVESEEGLKLAASLPDDEIIVEGYSEMVTHRALMAHFYDPKGDPSTEMTLDGVGGGAVMVKADVHRDGAMFPSFPFYHLIETEGFAKMAKRLGYEVYGLPNYLVFHYNE.

The Cytoplasmic segment spans residues 1–15; sequence MVHYRNRYLNYIRRK. A helical; Signal-anchor for type II membrane protein transmembrane segment spans residues 16 to 33; it reads PLALLAPITLLVVIYFYF. The Lumenal segment spans residues 34–368; that stretch reads FSAHGFSSNK…PNYLVFHYNE (335 aa).

Belongs to the ANP1/MMN9/VAN1 family.

The protein localises to the golgi apparatus membrane. It functions in the pathway protein modification; protein glycosylation. In terms of biological role, required for the addition of the long alpha 1,6-mannose backbone of N-linked glycans on cell wall and periplasmic proteins. The chain is Mannan polymerase complex subunit MNN9 (MNN9) from Candida albicans (strain SC5314 / ATCC MYA-2876) (Yeast).